The primary structure comprises 358 residues: Photosystem II protein D1 (358 aa).

The next 3 membrane-spanning stretches (helical) occupy residues 29–46 (YVGW…AATI), 116–131 (HFLI…QWEL), and 140–154 (WICV…AATS). Histidine 116 is a binding site for chlorophyll a. Tryptophan 124 contacts pheophytin a. 2 residues coordinate [CaMn4O5] cluster: aspartate 168 and glutamate 187. A helical membrane pass occupies residues 195–216 (FHQLGVAGVFGGSLFCAMHGSL). Histidine 196 contacts chlorophyll a. Residues histidine 213 and 262 to 263 (SF) each bind a quinone. Histidine 213 contributes to the Fe cation binding site. Fe cation is bound at residue histidine 270. Residues 272 to 286 (FLAAWPVVCIWFTAL) traverse the membrane as a helical segment. [CaMn4O5] cluster-binding residues include histidine 330, glutamate 331, aspartate 340, and alanine 342. Positions 343–358 (AGEVLPIALQSPAING) are excised as a propeptide.

Belongs to the reaction center PufL/M/PsbA/D family. As to quaternary structure, PSII is composed of 1 copy each of membrane proteins PsbA, PsbB, PsbC, PsbD, PsbE, PsbF, PsbH, PsbI, PsbJ, PsbK, PsbL, PsbM, PsbT, PsbX, PsbY, PsbZ, Psb30/Ycf12, peripheral proteins PsbO, CyanoQ (PsbQ), PsbU, PsbV and a large number of cofactors. It forms dimeric complexes. The D1/D2 heterodimer binds P680, chlorophylls that are the primary electron donor of PSII, and subsequent electron acceptors. It shares a non-heme iron and each subunit binds pheophytin, quinone, additional chlorophylls, carotenoids and lipids. D1 provides most of the ligands for the Mn4-Ca-O5 cluster of the oxygen-evolving complex (OEC). There is also a Cl(-1) ion associated with D1 and D2, which is required for oxygen evolution. The PSII complex binds additional chlorophylls, carotenoids and specific lipids. is required as a cofactor. Tyr-159 forms a radical intermediate that is referred to as redox-active TyrZ, YZ or Y-Z. Post-translationally, C-terminally processed by CtpA; processing is essential to allow assembly of the oxygen-evolving complex and thus photosynthetic growth.

The protein resides in the cellular thylakoid membrane. The catalysed reaction is 2 a plastoquinone + 4 hnu + 2 H2O = 2 a plastoquinol + O2. In terms of biological role, photosystem II (PSII) is a light-driven water:plastoquinone oxidoreductase that uses light energy to abstract electrons from H(2)O, generating O(2) and a proton gradient subsequently used for ATP formation. It consists of a core antenna complex that captures photons, and an electron transfer chain that converts photonic excitation into a charge separation. The D1/D2 (PsbA/PsbD) reaction center heterodimer binds P680, the primary electron donor of PSII as well as several subsequent electron acceptors. This Mastigocladus laminosus (Fischerella sp.) protein is Photosystem II protein D1.